Reading from the N-terminus, the 530-residue chain is Light-independent protochlorophyllide reductase subunit B (530 aa).

Position 36 (D36) interacts with [4Fe-4S] cluster. Catalysis depends on D290, which acts as the Proton donor. A substrate-binding site is contributed by 425 to 426 (GL). Residues 448–483 (LGHLGGHASETKTSSKGINQSPNNHSPAGESIHWTS) are disordered. Polar residues predominate over residues 458-473 (TKTSSKGINQSPNNHS).

It belongs to the ChlB/BchB/BchZ family. In terms of assembly, protochlorophyllide reductase is composed of three subunits; ChlL, ChlN and ChlB. Forms a heterotetramer of two ChlB and two ChlN subunits. Requires [4Fe-4S] cluster as cofactor.

It catalyses the reaction chlorophyllide a + oxidized 2[4Fe-4S]-[ferredoxin] + 2 ADP + 2 phosphate = protochlorophyllide a + reduced 2[4Fe-4S]-[ferredoxin] + 2 ATP + 2 H2O. It functions in the pathway porphyrin-containing compound metabolism; chlorophyll biosynthesis (light-independent). In terms of biological role, component of the dark-operative protochlorophyllide reductase (DPOR) that uses Mg-ATP and reduced ferredoxin to reduce ring D of protochlorophyllide (Pchlide) to form chlorophyllide a (Chlide). This reaction is light-independent. The NB-protein (ChlN-ChlB) is the catalytic component of the complex. This chain is Light-independent protochlorophyllide reductase subunit B, found in Prochlorococcus marinus (strain SARG / CCMP1375 / SS120).